The following is a 967-amino-acid chain: Zinc finger protein with KRAB and SCAN domains 2 (967 aa).

Residue K22 forms a Glycyl lysine isopeptide (Lys-Gly) (interchain with G-Cter in SUMO2) linkage. The SCAN box domain occupies 45 to 127 (RKCFRQFCYE…ALVVHLEKET (83 aa)). Residues 150 to 205 (WEVADFQPEQVETQPRAVSREEPGSLHSGHQEQLNRKRERRPLPKNARPSPWVPAL) form a disordered region. The segment covering 167–185 (VSREEPGSLHSGHQEQLNR) has biased composition (basic and acidic residues). The region spanning 229-300 (VKDVHVARGF…GLHSSNKRSI (72 aa)) is the KRAB domain. Residues K242, K259, K277, K337, K482, and K529 each participate in a glycyl lysine isopeptide (Lys-Gly) (interchain with G-Cter in SUMO2) cross-link. Low complexity predominate over residues 586–602 (RASAPSPSTPEEVPSPS). The interval 586-626 (RASAPSPSTPEEVPSPSRQERGGIEVEPQEPTGWEPEETSQ) is disordered. S591 and S600 each carry phosphoserine. Glycyl lysine isopeptide (Lys-Gly) (interchain with G-Cter in SUMO2) cross-links involve residues K734, K745, and K752. C2H2-type zinc fingers lie at residues 775–797 (YKCG…QRIH), 803–825 (FKCL…QRIH), 831–853 (YRCG…QRTH), 859–881 (YQCG…RRVH), 887–909 (YKCV…RRIH), and 915–937 (YGCA…REVH). Positions 941 to 967 (KPLPHPPSLYCPENPHKGKTDEFRKTF) are disordered. Basic and acidic residues predominate over residues 954–967 (NPHKGKTDEFRKTF).

This sequence belongs to the krueppel C2H2-type zinc-finger protein family.

Its subcellular location is the nucleus. Functionally, may be involved in transcriptional regulation. The chain is Zinc finger protein with KRAB and SCAN domains 2 (ZKSCAN2) from Homo sapiens (Human).